A 928-amino-acid chain; its full sequence is Isoleucine--tRNA ligase (928 aa).

The 'HIGH' region motif lies at proline 57–histidine 67. Glutamate 552 is an L-isoleucyl-5'-AMP binding site. The 'KMSKS' region motif lies at lysine 593–serine 597. Lysine 596 is an ATP binding site. Cysteine 887, cysteine 890, cysteine 907, and cysteine 910 together coordinate Zn(2+).

Belongs to the class-I aminoacyl-tRNA synthetase family. IleS type 1 subfamily. As to quaternary structure, monomer. Zn(2+) is required as a cofactor.

It localises to the cytoplasm. It catalyses the reaction tRNA(Ile) + L-isoleucine + ATP = L-isoleucyl-tRNA(Ile) + AMP + diphosphate. In terms of biological role, catalyzes the attachment of isoleucine to tRNA(Ile). As IleRS can inadvertently accommodate and process structurally similar amino acids such as valine, to avoid such errors it has two additional distinct tRNA(Ile)-dependent editing activities. One activity is designated as 'pretransfer' editing and involves the hydrolysis of activated Val-AMP. The other activity is designated 'posttransfer' editing and involves deacylation of mischarged Val-tRNA(Ile). The chain is Isoleucine--tRNA ligase from Lacticaseibacillus casei (strain BL23) (Lactobacillus casei).